Here is a 431-residue protein sequence, read N- to C-terminus: COBRA-like protein 4 (431 aa).

Positions 1–20 are cleaved as a signal peptide; it reads MRLLFSFCFFFFMIIFTATA. N-linked (GlcNAc...) asparagine glycosylation is found at asparagine 29, asparagine 154, asparagine 162, asparagine 201, asparagine 226, asparagine 306, asparagine 321, and asparagine 340. The GPI-anchor amidated asparagine moiety is linked to residue asparagine 414. Positions 415–431 are cleaved as a propeptide — removed in mature form; it reads FASFSLTILLLLFISIW.

Belongs to the COBRA family. Expressed in roots, stems, leaves, flowers and siliques.

It localises to the cell membrane. The protein is COBRA-like protein 4 (COBL4) of Arabidopsis thaliana (Mouse-ear cress).